A 336-amino-acid polypeptide reads, in one-letter code: Dihydroorotate dehydrogenase (quinone) (336 aa).

Residues 62-66 (AGLDK) and Thr86 contribute to the FMN site. Lys66 serves as a coordination point for substrate. Substrate is bound at residue 111–115 (NRMGF). The FMN site is built by Asn139 and Asn172. Residue Asn172 coordinates substrate. Ser175 (nucleophile) is an active-site residue. Asn177 is a substrate binding site. Lys217 and Thr245 together coordinate FMN. 246–247 (NT) serves as a coordination point for substrate. FMN is bound by residues Gly268, Gly297, and 318–319 (YS).

The protein belongs to the dihydroorotate dehydrogenase family. Type 2 subfamily. In terms of assembly, monomer. The cofactor is FMN.

It localises to the cell membrane. The catalysed reaction is (S)-dihydroorotate + a quinone = orotate + a quinol. It participates in pyrimidine metabolism; UMP biosynthesis via de novo pathway; orotate from (S)-dihydroorotate (quinone route): step 1/1. Catalyzes the conversion of dihydroorotate to orotate with quinone as electron acceptor. The polypeptide is Dihydroorotate dehydrogenase (quinone) (Salmonella typhi).